Consider the following 291-residue polypeptide: Serine hydrolase BPHL (291 aa).

The signal sequence occupies residues 1 to 37 (MATATVRPAAQRLRLLLSPLKSRICVPQAEPVATFGT). One can recognise an AB hydrolase-1 domain in the interval 62–173 (AILLLPGMLG…ANAYVTEEDS (112 aa)). The residue at position 74 (Lys-74) is an N6-acetyllysine; alternate. The residue at position 74 (Lys-74) is an N6-succinyllysine; alternate. N6-acetyllysine occurs at positions 86 and 119. Position 126 is an N6-acetyllysine; alternate (Lys-126). Lys-126 is modified (N6-succinyllysine; alternate). Catalysis depends on Ser-139, which acts as the Nucleophile. Lys-184 carries the N6-succinyllysine modification. At Lys-191 the chain carries N6-acetyllysine; alternate. Lys-191 is modified (N6-succinyllysine; alternate). At Lys-217 the chain carries N6-acetyllysine. Residue Glu-221 coordinates Mg(2+). An N6-acetyllysine modification is found at Lys-243. The active-site Charge relay system is the Asp-244. 2 positions are modified to N6-acetyllysine; alternate: Lys-260 and Lys-271. N6-succinyllysine; alternate is present on residues Lys-260 and Lys-271. Residue His-272 is the Charge relay system of the active site.

This sequence belongs to the AB hydrolase superfamily. Lipase family. As to quaternary structure, monomer. May also form homodimers.

It localises to the mitochondrion. The enzyme catalyses L-homocysteine thiolactone + H2O = L-homocysteine + H(+). The catalysed reaction is valacyclovir + H2O = acyclovir + L-valine + H(+). In terms of biological role, specific alpha-amino acid ester serine hydrolase that prefers small, hydrophobic, and aromatic side chains and does not have a stringent requirement for the leaving group other than preferring a primary alcohol. Has homocysteine-thiolactonase activity (in vitro) and may play a significant role in the detoxification of homocysteine thiolactone in vivo. Catalyzes the hydrolytic activation of amino acid ester prodrugs of nucleoside analogs such as valacyclovir and valganciclovir, converting them into their active forms (acyclovir and ganciclovir). This chain is Serine hydrolase BPHL (Bphl), found in Mus musculus (Mouse).